The chain runs to 454 residues: Bifunctional protein GlmU (454 aa).

The segment at 1-232 (MTDRTCLSIV…VDNVIGINNR (232 aa)) is pyrophosphorylase. Residues 11 to 14 (LAAG), K25, Q78, and 83 to 84 (GT) contribute to the UDP-N-acetyl-alpha-D-glucosamine site. D108 provides a ligand contact to Mg(2+). Residues G144, E158, N173, and N230 each coordinate UDP-N-acetyl-alpha-D-glucosamine. Mg(2+) is bound at residue N230. Residues 233 to 253 (VELAEAEAIWQQRKRREMMLA) are linker. The segment at 254–454 (GVTLIAPETV…AIKAAKTATK (201 aa)) is N-acetyltransferase. UDP-N-acetyl-alpha-D-glucosamine-binding residues include R319 and K337. H349 acts as the Proton acceptor in catalysis. Residues Y352 and N363 each coordinate UDP-N-acetyl-alpha-D-glucosamine. Acetyl-CoA contacts are provided by residues A366, 372–373 (NY), S391, S409, and R426.

In the N-terminal section; belongs to the N-acetylglucosamine-1-phosphate uridyltransferase family. The protein in the C-terminal section; belongs to the transferase hexapeptide repeat family. In terms of assembly, homotrimer. It depends on Mg(2+) as a cofactor.

It localises to the cytoplasm. It carries out the reaction alpha-D-glucosamine 1-phosphate + acetyl-CoA = N-acetyl-alpha-D-glucosamine 1-phosphate + CoA + H(+). The catalysed reaction is N-acetyl-alpha-D-glucosamine 1-phosphate + UTP + H(+) = UDP-N-acetyl-alpha-D-glucosamine + diphosphate. The protein operates within nucleotide-sugar biosynthesis; UDP-N-acetyl-alpha-D-glucosamine biosynthesis; N-acetyl-alpha-D-glucosamine 1-phosphate from alpha-D-glucosamine 6-phosphate (route II): step 2/2. It participates in nucleotide-sugar biosynthesis; UDP-N-acetyl-alpha-D-glucosamine biosynthesis; UDP-N-acetyl-alpha-D-glucosamine from N-acetyl-alpha-D-glucosamine 1-phosphate: step 1/1. It functions in the pathway bacterial outer membrane biogenesis; LPS lipid A biosynthesis. In terms of biological role, catalyzes the last two sequential reactions in the de novo biosynthetic pathway for UDP-N-acetylglucosamine (UDP-GlcNAc). The C-terminal domain catalyzes the transfer of acetyl group from acetyl coenzyme A to glucosamine-1-phosphate (GlcN-1-P) to produce N-acetylglucosamine-1-phosphate (GlcNAc-1-P), which is converted into UDP-GlcNAc by the transfer of uridine 5-monophosphate (from uridine 5-triphosphate), a reaction catalyzed by the N-terminal domain. The chain is Bifunctional protein GlmU from Brucella anthropi (strain ATCC 49188 / DSM 6882 / CCUG 24695 / JCM 21032 / LMG 3331 / NBRC 15819 / NCTC 12168 / Alc 37) (Ochrobactrum anthropi).